Reading from the N-terminus, the 66-residue chain is Large ribosomal subunit protein bL33 (66 aa).

Belongs to the bacterial ribosomal protein bL33 family.

The sequence is that of Large ribosomal subunit protein bL33 from Wolbachia sp. subsp. Brugia malayi (strain TRS).